The sequence spans 328 residues: D-cysteine desulfhydrase (328 aa).

N6-(pyridoxal phosphate)lysine is present on lysine 51.

This sequence belongs to the ACC deaminase/D-cysteine desulfhydrase family. Homodimer. Pyridoxal 5'-phosphate serves as cofactor.

It catalyses the reaction D-cysteine + H2O = hydrogen sulfide + pyruvate + NH4(+) + H(+). Its function is as follows. Catalyzes the alpha,beta-elimination reaction of D-cysteine and of several D-cysteine derivatives. It could be a defense mechanism against D-cysteine. The protein is D-cysteine desulfhydrase of Escherichia coli O7:K1 (strain IAI39 / ExPEC).